Reading from the N-terminus, the 372-residue chain is N-methyl-L-tryptophan oxidase (372 aa).

Residue 4–34 participates in FAD binding; sequence DLIIIGSGSVGAAAGYYATRAGLKVLMTDAH. Cys307 is subject to S-8alpha-FAD cysteine.

The protein belongs to the MSOX/MTOX family. MTOX subfamily. As to quaternary structure, monomer. FAD serves as cofactor.

The enzyme catalyses N(alpha)-methyl-L-tryptophan + O2 + H2O = L-tryptophan + formaldehyde + H2O2. Its function is as follows. Catalyzes the oxidative demethylation of N-methyl-L-tryptophan. This is N-methyl-L-tryptophan oxidase from Salmonella arizonae (strain ATCC BAA-731 / CDC346-86 / RSK2980).